A 500-amino-acid chain; its full sequence is Aspartyl/glutamyl-tRNA(Asn/Gln) amidotransferase subunit B (500 aa).

The protein belongs to the GatB/GatE family. GatB subfamily. In terms of assembly, heterotrimer of A, B and C subunits.

It catalyses the reaction L-glutamyl-tRNA(Gln) + L-glutamine + ATP + H2O = L-glutaminyl-tRNA(Gln) + L-glutamate + ADP + phosphate + H(+). It carries out the reaction L-aspartyl-tRNA(Asn) + L-glutamine + ATP + H2O = L-asparaginyl-tRNA(Asn) + L-glutamate + ADP + phosphate + 2 H(+). Functionally, allows the formation of correctly charged Asn-tRNA(Asn) or Gln-tRNA(Gln) through the transamidation of misacylated Asp-tRNA(Asn) or Glu-tRNA(Gln) in organisms which lack either or both of asparaginyl-tRNA or glutaminyl-tRNA synthetases. The reaction takes place in the presence of glutamine and ATP through an activated phospho-Asp-tRNA(Asn) or phospho-Glu-tRNA(Gln). This is Aspartyl/glutamyl-tRNA(Asn/Gln) amidotransferase subunit B from Thermosynechococcus vestitus (strain NIES-2133 / IAM M-273 / BP-1).